Here is a 591-residue protein sequence, read N- to C-terminus: Protein phosphatase EYA1 (591 aa).

Disordered regions lie at residues 1 to 95, 150 to 169, and 239 to 319; these read MEMQ…SYPH, GLSQ…GTSF, and MTSS…PDSD. Residues 8-23 show a composition bias toward low complexity; that stretch reads SPHSRLSGSSESPSGP. Over residues 28–53 the composition is skewed to polar residues; sequence SHINSTSMTPNGTEVKTEPMSSSEIA. A compositionally biased stretch (low complexity) spans 56–75; that stretch reads AADGSLDSFSGSALGSSSFS. Pro residues predominate over residues 78 to 87; that stretch reads PAHPFSPPQI. Over residues 240–252 the composition is skewed to low complexity; sequence TSSNTSPTTPSTN. Over residues 253–286 the composition is skewed to polar residues; it reads ATYQLQEPPSGVTSQAVTDPTAEYSTIHSPSTPI. A compositionally biased stretch (basic and acidic residues) spans 287–302; the sequence is KETDSERLRRGSDGKS. The active-site Nucleophile is the aspartate 327. 3 residues coordinate Mg(2+): aspartate 327, aspartate 329, and aspartate 555. The active-site Proton donor is the aspartate 329.

It belongs to the HAD-like hydrolase superfamily. EYA family. In terms of assembly, probably interacts with SIX2, SIX4 and SIX5. Interacts with H2AX in response to DNA damage. Interacts with SIX3; promotes EYA1 translocation to the nucleus. It depends on Mg(2+) as a cofactor. Sumoylated with SUMO1. In terms of tissue distribution, extensively expressed in cranial placodes, branchial arches, CNS and developing eye and nose.

Its subcellular location is the cytoplasm. It is found in the nucleus. It carries out the reaction O-phospho-L-tyrosyl-[protein] + H2O = L-tyrosyl-[protein] + phosphate. It catalyses the reaction O-phospho-L-seryl-[protein] + H2O = L-seryl-[protein] + phosphate. The enzyme catalyses O-phospho-L-threonyl-[protein] + H2O = L-threonyl-[protein] + phosphate. Functionally, functions both as protein phosphatase and as transcriptional coactivator for SIX1, and probably also for SIX2, SIX4 and SIX5. Tyrosine phosphatase that dephosphorylates 'Tyr-142' of histone H2AX (H2AXY142ph) and promotes efficient DNA repair via the recruitment of DNA repair complexes containing MDC1. 'Tyr-142' phosphorylation of histone H2AX plays a central role in DNA repair and acts as a mark that distinguishes between apoptotic and repair responses to genotoxic stress. Its function as histone phosphatase may contribute to its function in transcription regulation during organogenesis. Also has phosphatase activity with proteins phosphorylated on Ser and Thr residues (in vitro). Required for normal embryonic development of the craniofacial and trunk skeleton, kidneys and ears. Together with SIX1, it plays an important role in hypaxial muscle development; in this it is functionally redundant with EYA2. The sequence is that of Protein phosphatase EYA1 (Eya1) from Mus musculus (Mouse).